A 62-amino-acid chain; its full sequence is Large ribosomal subunit protein uL29 (62 aa).

The protein belongs to the universal ribosomal protein uL29 family.

The protein is Large ribosomal subunit protein uL29 of Desulfosudis oleivorans (strain DSM 6200 / JCM 39069 / Hxd3) (Desulfococcus oleovorans).